A 98-amino-acid chain; its full sequence is Histone H4-like protein type G (98 aa).

The DNA-binding element occupies 17–21; that stretch reads KCHRK.

This sequence belongs to the histone H4 family. In terms of assembly, the nucleosome is a histone octamer containing two molecules each of H2A, H2B, H3 and H4 assembled in one H3-H4 heterotetramer and two H2A-H2B heterodimers. The octamer wraps approximately 147 bp of DNA.

The protein localises to the nucleus. It is found in the chromosome. Functionally, core component of nucleosome. Nucleosomes wrap and compact DNA into chromatin, limiting DNA accessibility to the cellular machineries which require DNA as a template. Histones thereby play a central role in transcription regulation, DNA repair, DNA replication and chromosomal stability. DNA accessibility is regulated via a complex set of post-translational modifications of histones, also called histone code, and nucleosome remodeling. The polypeptide is Histone H4-like protein type G (Homo sapiens (Human)).